We begin with the raw amino-acid sequence, 723 residues long: 1,3-beta-galactosyl-N-acetylhexosamine phosphorylase Cphy0577 (723 aa).

Aspartate 317 functions as the Proton donor in the catalytic mechanism.

Belongs to the glycoside hydrolase 112 family.

The catalysed reaction is beta-D-galactosyl-(1-&gt;3)-N-acetyl-D-glucosamine + phosphate = alpha-D-galactose 1-phosphate + N-acetyl-D-glucosamine. Reversibly phosphorolyzes beta-D-galactopyranosyl-(1-&gt;3)-N-acetyl-D-glucosamine to form alpha-D-galactopyranose 1-phosphate and acetyl-D-glucosamine. Active towards galacto-N-biose and lacto-N-biose. Does not phosphorolyze galacto-N-tetraose or lacto-N-tetraose. In the reverse reaction has activity toward N-acetyl-D-glucosamine and N-acetyl-D-galactosamine, but not L-rhamnose, D-glucose or D-galactose. In Lachnoclostridium phytofermentans (strain ATCC 700394 / DSM 18823 / ISDg) (Clostridium phytofermentans), this protein is 1,3-beta-galactosyl-N-acetylhexosamine phosphorylase Cphy0577.